Here is a 350-residue protein sequence, read N- to C-terminus: Transmembrane protein 185B (350 aa).

The next 7 helical transmembrane spans lie at 16-36, 41-61, 81-101, 111-131, 168-188, 211-231, and 240-260; these read LIYA…DGVI, WAVF…ASVG, FKAM…EVLV, FWLL…AACV, WLVV…VVLY, VTMA…EVLL, and MFSY…LMAT.

This sequence belongs to the TMEM185 family.

The protein localises to the membrane. The chain is Transmembrane protein 185B (TMEM185B) from Bos taurus (Bovine).